Reading from the N-terminus, the 63-residue chain is Putative transmembrane protein ORF63 (63 aa).

The Extracellular segment spans residues 1–8 (MQSGNFTL). The helical transmembrane segment at 9 to 29 (EVIMYLINSILAFIMIFFTFV) threads the bilayer. Residues 30-31 (NP) lie on the Cytoplasmic side of the membrane. The chain crosses the membrane as a helical span at residues 32 to 52 (SLLKCQYWTYILVALITAIIF). Over 53–63 (HTGSKVGKSSG) the chain is Extracellular.

It localises to the host membrane. The protein is Putative transmembrane protein ORF63 of Acidianus filamentous virus 1 (isolate United States/Yellowstone) (AFV-1).